Here is a 309-residue protein sequence, read N- to C-terminus: Homoserine kinase (309 aa).

91–101 serves as a coordination point for ATP; that stretch reads PIGSGLGSSAC.

This sequence belongs to the GHMP kinase family. Homoserine kinase subfamily.

Its subcellular location is the cytoplasm. It carries out the reaction L-homoserine + ATP = O-phospho-L-homoserine + ADP + H(+). It functions in the pathway amino-acid biosynthesis; L-threonine biosynthesis; L-threonine from L-aspartate: step 4/5. In terms of biological role, catalyzes the ATP-dependent phosphorylation of L-homoserine to L-homoserine phosphate. This Escherichia fergusonii (strain ATCC 35469 / DSM 13698 / CCUG 18766 / IAM 14443 / JCM 21226 / LMG 7866 / NBRC 102419 / NCTC 12128 / CDC 0568-73) protein is Homoserine kinase.